The primary structure comprises 1343 residues: DNA-directed RNA polymerase subunit beta (1343 aa).

Belongs to the RNA polymerase beta chain family. In terms of assembly, the RNAP catalytic core consists of 2 alpha, 1 beta, 1 beta' and 1 omega subunit. When a sigma factor is associated with the core the holoenzyme is formed, which can initiate transcription.

The enzyme catalyses RNA(n) + a ribonucleoside 5'-triphosphate = RNA(n+1) + diphosphate. Functionally, DNA-dependent RNA polymerase catalyzes the transcription of DNA into RNA using the four ribonucleoside triphosphates as substrates. In Shewanella pealeana (strain ATCC 700345 / ANG-SQ1), this protein is DNA-directed RNA polymerase subunit beta.